The chain runs to 426 residues: COMPASS component SWD1 (426 aa).

WD repeat units follow at residues 24 to 63 (ENPLRTECLQFSPCGDYLALGCANGALVIYDMDTFRPICV), 70 to 109 (AHVRPITSIAWSPDGRLLLTSSRDWSIKLWDLSKPSKPLK), 212 to 251 (ITSSNIKHLIVSQNGERLAINCSDRTIRQYEISIDDENSA), 264 to 307 (INKL…LVRV), and 310 to 350 (GAEE…KWSA). The DNA site is built by Arg-236 and Lys-266.

Component of the Set1C/COMPASS complex which consists of SET1(2), BRE2(2), SPP1(2), SDC1(1), SHG1(1), SWD1(1), SWD2(1), and SWD3(1).

It is found in the nucleus. The protein localises to the chromosome. The protein resides in the telomere. Its function is as follows. Component of the Set1C/COMPASS complex that specifically mono-, di- and trimethylates histone H3 to form H3K4me1/2/3, which subsequently plays a role in telomere length maintenance and transcription elongation regulation. COMPASS recognizes ubiquitinated H2B on one face of the nucleosome which stimulates the methylation of H3 on the opposing face. SWD1/CPS50 acts as an assembly and regulatory hub for COMPASS complex formation. Serves as a highly utilized surface for COMPASS interaction with the nucleosome. The sequence is that of COMPASS component SWD1 from Saccharomyces cerevisiae (strain ATCC 204508 / S288c) (Baker's yeast).